Here is a 191-residue protein sequence, read N- to C-terminus: Small ribosomal subunit protein uS7 (191 aa).

Residues 56–80 (NKSGEQGDGDGESGGKAGGIKKRSL) form a disordered region.

The protein belongs to the universal ribosomal protein uS7 family. In terms of assembly, part of the 30S ribosomal subunit. Contacts proteins S9 and S11.

Functionally, one of the primary rRNA binding proteins, it binds directly to 16S rRNA where it nucleates assembly of the head domain of the 30S subunit. Is located at the subunit interface close to the decoding center, probably blocks exit of the E-site tRNA. The polypeptide is Small ribosomal subunit protein uS7 (Coxiella burnetii (strain CbuK_Q154) (Coxiella burnetii (strain Q154))).